A 360-amino-acid polypeptide reads, in one-letter code: Transcriptional coactivator MYCFIDRAFT_190109 (360 aa).

An HTH iclR-type domain is found at 3-67 (GMALNQLLAC…GFLHEPRPGQ (65 aa)). Residues 33-52 (ARDVADLTGVPETQLCRVVR) constitute a DNA-binding region (H-T-H motif).

The protein resides in the nucleus. Transcriptional coactivator; part of the gene cluster that mediates the biosynthesis of an emodin derivative that may be involved in black Sigatoka disease of banana. With MYCFIDRAFT_198930, coregulates the production of the PKS8-1 cluster product. This chain is Transcriptional coactivator MYCFIDRAFT_190109, found in Pseudocercospora fijiensis (strain CIRAD86) (Black leaf streak disease fungus).